Consider the following 411-residue polypeptide: Methylthioribose-1-phosphate isomerase (411 aa).

N-acetylserine is present on Ser2. The Proton donor role is filled by Asp280. Residue Ser351 is modified to Phosphoserine.

This sequence belongs to the eIF-2B alpha/beta/delta subunits family. MtnA subfamily. Homodimer.

The protein resides in the cytoplasm. Its subcellular location is the nucleus. It catalyses the reaction 5-(methylsulfanyl)-alpha-D-ribose 1-phosphate = 5-(methylsulfanyl)-D-ribulose 1-phosphate. Its pathway is amino-acid biosynthesis; L-methionine biosynthesis via salvage pathway; L-methionine from S-methyl-5-thio-alpha-D-ribose 1-phosphate: step 1/6. Its function is as follows. Catalyzes the interconversion of methylthioribose-1-phosphate (MTR-1-P) into methylthioribulose-1-phosphate (MTRu-1-P). The protein is Methylthioribose-1-phosphate isomerase of Saccharomyces cerevisiae (strain RM11-1a) (Baker's yeast).